Here is a 2049-residue protein sequence, read N- to C-terminus: Kinetochore-associated protein rod-1 (2049 aa).

In terms of assembly, component of the RZZ complex composed of rod-1, czw-1 and zwl-1. Interacts (via N-terminus) with NDC80 complex component ndc-80.

The protein localises to the chromosome. The protein resides in the centromere. It localises to the kinetochore. Its subcellular location is the cytoplasm. It is found in the cytoskeleton. The protein localises to the spindle. Its function is as follows. Essential component of the mitotic checkpoint, which prevents cells from prematurely exiting mitosis. Required for chromosome segregation, the assembly of the dynein-dynactin and mdf-1-mdf-2 complexes onto kinetochores and spindle pole separation. Plays a role in nuclear envelope breakdown. Its function related to the spindle assembly machinery and kinetochore-microtubule attachments likely depends on its association in the mitotic RZZ complex. The RZZ complex recruits the spindly-like protein spdl-1 to kinetochores. To prevent irregular chromosome segregation, the complex also inhibits the attachment of the kinetochore-associated NDC80 complex to microtubules. The recruitment of spdl-1 to kinetochores relieves this inhibition. Required for embryonic development. In Caenorhabditis elegans, this protein is Kinetochore-associated protein rod-1.